Reading from the N-terminus, the 66-residue chain is Kappa-flavitoxin (66 aa).

5 disulfides stabilise this stretch: C3–C21, C14–C42, C27–C31, C46–C58, and C59–C64.

It belongs to the three-finger toxin family. Long-chain subfamily. Kappa-neurotoxin sub-subfamily. As to quaternary structure, homo- and heterodimer; non-covalently linked. In terms of tissue distribution, expressed by the venom gland.

It is found in the secreted. Functionally, postsynaptic neurotoxin that binds and inhibits neuronal nicotinic acetylcholine receptors (nAChR) with high affinity (IC(50)&lt;100 nM). Is a selective, and slowly reversible antagonist of alpha-3/CHRNA3-containing and some alpha-4/CHRNA4-containing AChRs. The protein is Kappa-flavitoxin of Bungarus flaviceps flaviceps (Red-headed krait).